Consider the following 232-residue polypeptide: Large ribosomal subunit protein uL1 (232 aa).

The protein belongs to the universal ribosomal protein uL1 family. In terms of assembly, part of the 50S ribosomal subunit.

Functionally, binds directly to 23S rRNA. The L1 stalk is quite mobile in the ribosome, and is involved in E site tRNA release. Its function is as follows. Protein L1 is also a translational repressor protein, it controls the translation of the L11 operon by binding to its mRNA. The chain is Large ribosomal subunit protein uL1 from Burkholderia cenocepacia (strain ATCC BAA-245 / DSM 16553 / LMG 16656 / NCTC 13227 / J2315 / CF5610) (Burkholderia cepacia (strain J2315)).